The following is a 229-amino-acid chain: Prolactin (229 aa).

An N-terminal signal peptide occupies residues 1–30; that stretch reads MDSKVSSQKGSRLLLLLVVSNLLLCQGVVS. Cys34 and Cys41 form a disulfide bridge. Residues Ser56, Ser64, and Ser120 each carry the phosphoserine modification. 2 disulfides stabilise this stretch: Cys88–Cys204 and Cys221–Cys229.

Belongs to the somatotropin/prolactin family. As to quaternary structure, interacts with PRLR.

Its subcellular location is the secreted. Functionally, prolactin acts primarily on the mammary gland by promoting lactation. This is Prolactin (PRL) from Cervus elaphus (Red deer).